Reading from the N-terminus, the 151-residue chain is Mediator of RNA polymerase II transcription subunit 32 (151 aa).

The tract at residues 128 to 151 (GVAPGSVHSSSTGFDSRFSEDSTQ) is disordered.

Belongs to the mediator complex subunit 32 family. In terms of assembly, oligomers. Component of the Mediator complex. Interacts with MED6. Interacts with GEBPL.

The protein localises to the nucleus. Its function is as follows. Component of the Mediator complex, a coactivator involved in the regulated transcription of nearly all RNA polymerase II-dependent genes. Mediator functions as a bridge to convey information from gene-specific regulatory proteins to the basal RNA polymerase II transcription machinery. The Mediator complex, having a compact conformation in its free form, is recruited to promoters by direct interactions with regulatory proteins and serves for the assembly of a functional pre-initiation complex with RNA polymerase II and the general transcription factors. In Arabidopsis thaliana (Mouse-ear cress), this protein is Mediator of RNA polymerase II transcription subunit 32 (MED32).